A 298-amino-acid chain; its full sequence is MNHIISIHDLDRDQIDRLLARAGEVTAEFAGKEPLKGKILGLLFFEPSTRTRMSFESAMLRLGGSCMNLGGVEVSSMAKGETLADTIRVVSGYADAIVLRHPKVGAARLASEFSEIPILNGGDGAGQHPSQTLIDLYTIRQSMSLDNIHIGLIGDLMYGRTTHSLAYALTHYNARIHTIAPKGLGLPDSIHDNLEERGATVIEHDSIEEVISDLDVLYVTRLQRERFPDPAKFYDVSSSYRITPSLLTDVKEHLAILHPLPRVDEIDPSVDNLPYARYFEQARNGVPVRMAMLTEVMV.

The carbamoyl phosphate site is built by Arg50 and Thr51. Lys79 lines the L-aspartate pocket. Carbamoyl phosphate contacts are provided by Arg100, His128, and Gln131. Positions 160 and 221 each coordinate L-aspartate. Residues Leu260 and Pro261 each contribute to the carbamoyl phosphate site.

It belongs to the aspartate/ornithine carbamoyltransferase superfamily. ATCase family. As to quaternary structure, heterooligomer of catalytic and regulatory chains.

The catalysed reaction is carbamoyl phosphate + L-aspartate = N-carbamoyl-L-aspartate + phosphate + H(+). The protein operates within pyrimidine metabolism; UMP biosynthesis via de novo pathway; (S)-dihydroorotate from bicarbonate: step 2/3. In terms of biological role, catalyzes the condensation of carbamoyl phosphate and aspartate to form carbamoyl aspartate and inorganic phosphate, the committed step in the de novo pyrimidine nucleotide biosynthesis pathway. The protein is Aspartate carbamoyltransferase catalytic subunit of Methanospirillum hungatei JF-1 (strain ATCC 27890 / DSM 864 / NBRC 100397 / JF-1).